The chain runs to 268 residues: ELL-associated factor 1 (268 aa).

The segment at 106-268 is disordered; the sequence is IQVKKTRAEG…LSESGSDSDD (163 aa). A compositionally biased stretch (pro residues) spans 128–154; the sequence is TRPPQTSQPPPPPPPMPFRAPTKPPVG. Ser165 is modified (phosphoserine). Residues 171 to 181 show a composition bias toward basic and acidic residues; the sequence is DDIKRELRAEV. The necessary for transactivation activity stretch occupies residues 182–262; sequence DIIEQMSSSS…LRNDLQLSES (81 aa). Low complexity predominate over residues 188–213; that stretch reads SSSSGSSSSDSESSSGSDDDSSSSGG. The span at 238–268 shows a compositional bias: polar residues; sequence NGTSRPQGSNQLMNTLRNDLQLSESGSDSDD.

It belongs to the EAF family. Component of the super elongation complex (SEC), at least composed of EAF1, EAF2, CDK9, MLLT3/AF9, AFF (AFF1 or AFF4), the P-TEFb complex and ELL (ELL, ELL2 or ELL3). Interacts with ELL and ELL2. As to expression, strongly expressed in heart, brain, placenta, lung, liver, skeletal muscle, kidney, pancreas, spleen, prostate, testis, small intestine and colon. Poorly expressed in thymus.

The protein localises to the nucleus speckle. It is found in the nucleus. The protein resides in the cajal body. Its function is as follows. Acts as a transcriptional transactivator of ELL and ELL2 elongation activities. The chain is ELL-associated factor 1 (EAF1) from Homo sapiens (Human).